The following is a 399-amino-acid chain: Tryptophan synthase beta chain (399 aa).

The residue at position 91 (lysine 91) is an N6-(pyridoxal phosphate)lysine.

It belongs to the TrpB family. In terms of assembly, tetramer of two alpha and two beta chains. It depends on pyridoxal 5'-phosphate as a cofactor.

It carries out the reaction (1S,2R)-1-C-(indol-3-yl)glycerol 3-phosphate + L-serine = D-glyceraldehyde 3-phosphate + L-tryptophan + H2O. Its pathway is amino-acid biosynthesis; L-tryptophan biosynthesis; L-tryptophan from chorismate: step 5/5. Functionally, the beta subunit is responsible for the synthesis of L-tryptophan from indole and L-serine. In Shouchella clausii (strain KSM-K16) (Alkalihalobacillus clausii), this protein is Tryptophan synthase beta chain.